Reading from the N-terminus, the 407-residue chain is Frizzled/smoothened-like sans CRD protein J (407 aa).

Positions 1–23 are cleaved as a signal peptide; the sequence is MKFLFSVILVIISFLGISKIVNG. The Extracellular segment spans residues 24 to 89; it reads QIACPSPFLY…WNSFNKLVKQ (66 aa). N-linked (GlcNAc...) asparagine glycosylation occurs at asparagine 37. A helical membrane pass occupies residues 90-110; it reads MGAVAFTCSAIIMIIYGPLMN. The Cytoplasmic segment spans residues 111-120; it reads RSFFKFDRHT. Residues 121-141 traverse the membrane as a helical segment; it reads ITVFCFALSTFFIGVSDLMFA. Residues 142–169 lie on the Extracellular side of the membrane; that stretch reads TNDVDMVCPESHRYARQTDKTCATNGVL. The chain crosses the membrane as a helical span at residues 170 to 190; sequence FQFGWLGSVMWFAFLSIDGFF. The Cytoplasmic segment spans residues 191–199; the sequence is RASGKKMNK. Residues 200–220 traverse the membrane as a helical segment; it reads IAFAIVLASIWILNIVLSFAP. At 221–246 the chain is on the extracellular side; it reads MGGDQYGAYFVGQVNCWILVKNWQYA. The chain crosses the membrane as a helical span at residues 247 to 267; that stretch reads FFWAELIVSLAIGFVGICLTI. Topologically, residues 268–285 are cytoplasmic; that stretch reads YSLIRKTSDGNTLKHVTP. A helical transmembrane segment spans residues 286-306; sequence LILVFLLFCQYLYMIIFYGII. Residues 307-354 are Extracellular-facing; the sequence is NEKKDHYQNILAEQVGCIFNNALAKMKVPGIVYAGECTFNETITFSSQ. The N-linked (GlcNAc...) asparagine glycan is linked to asparagine 346. The helical transmembrane segment at 355–375 threads the bilayer; the sequence is YAFLFFVRLLGIEIFAFYLFS. Topologically, residues 376 to 407 are cytoplasmic; it reads KETLLLIKSSYIATMFGLGDKDAYDVELEETD.

Belongs to the G-protein coupled receptor Fz/Smo family.

It is found in the membrane. This chain is Frizzled/smoothened-like sans CRD protein J (fscJ), found in Dictyostelium discoideum (Social amoeba).